The following is a 72-amino-acid chain: Alpha-elapitoxin-Ast2b (72 aa).

Intrachain disulfides connect cysteine 3-cysteine 20, cysteine 13-cysteine 41, cysteine 26-cysteine 30, cysteine 45-cysteine 56, and cysteine 57-cysteine 62. Position 72 is an arginine amide (arginine 72).

Belongs to the three-finger toxin family. Long-chain subfamily. Type II alpha-neurotoxin sub-subfamily. As to expression, expressed by the venom gland.

The protein resides in the secreted. In terms of biological role, binds with high affinity to muscular (alpha-1/CHRNA1) and neuronal (alpha-7/CHRNA7) nicotinic acetylcholine receptor (nAChR) and inhibits acetylcholine from binding to the receptor, thereby impairing neuromuscular and neuronal transmission. The protein is Alpha-elapitoxin-Ast2b of Hydrophis stokesii (Stokes's sea snake).